The chain runs to 149 residues: Large ribosomal subunit protein bL9 (149 aa).

The protein belongs to the bacterial ribosomal protein bL9 family.

Functionally, binds to the 23S rRNA. This chain is Large ribosomal subunit protein bL9, found in Ligilactobacillus salivarius (strain UCC118) (Lactobacillus salivarius).